Reading from the N-terminus, the 248-residue chain is Adenosylcobinamide-GDP ribazoletransferase (248 aa).

The next 6 helical transmembrane spans lie at 36–56 (FFLPVVAFIIGGMEFLIYLAL), 59–79 (FLPPNVIIVLLILFTAMITGG), 114–134 (GTIALIIDLLLKYQLLYSLVL), 137–157 (YSIAIVLAPIIGRISILFLCL), 170–190 (IFIGNMSKPIIFFITTIVLAL), and 199–219 (ATIIPFIGVLLITYLLYLLCL).

The protein belongs to the CobS family. Mg(2+) serves as cofactor.

It is found in the cell membrane. The catalysed reaction is alpha-ribazole + adenosylcob(III)inamide-GDP = adenosylcob(III)alamin + GMP + H(+). It catalyses the reaction alpha-ribazole 5'-phosphate + adenosylcob(III)inamide-GDP = adenosylcob(III)alamin 5'-phosphate + GMP + H(+). It participates in cofactor biosynthesis; adenosylcobalamin biosynthesis; adenosylcobalamin from cob(II)yrinate a,c-diamide: step 7/7. Its function is as follows. Joins adenosylcobinamide-GDP and alpha-ribazole to generate adenosylcobalamin (Ado-cobalamin). Also synthesizes adenosylcobalamin 5'-phosphate from adenosylcobinamide-GDP and alpha-ribazole 5'-phosphate. This is Adenosylcobinamide-GDP ribazoletransferase from Clostridium botulinum (strain Okra / Type B1).